Consider the following 749-residue polypeptide: Protein Niban 2 (749 aa).

A lipid anchor (N-myristoyl glycine) is attached at G2. The PH domain occupies 68–192; that stretch reads RIIFSGNLFQ…WQAVLQDCVR (125 aa). A phosphoserine mark is found at S568, S574, S607, S628, S647, S650, S669, S674, S685, S695, and S699. The tract at residues 589-749 is disordered; sequence WGEQYGDSGD…EDSAGVQTEF (161 aa). Residues 710–719 are compositionally biased toward basic and acidic residues; that stretch reads VDLEPPKPSD. Positions 723-749 are enriched in polar residues; it reads GEQVSSPGSRPPIHTTTEDSAGVQTEF.

The protein belongs to the Niban family. In terms of processing, as apoptosis proceeds, degraded via an proteasome-independent pathway, probably by caspases.

It is found in the cytoplasm. Its subcellular location is the cytosol. The protein resides in the cell junction. The protein localises to the adherens junction. It localises to the membrane. Functionally, may play a role in apoptosis suppression. In Mus musculus (Mouse), this protein is Protein Niban 2.